A 595-amino-acid chain; its full sequence is Protein kinase C iota type (595 aa).

Positions 1–12 (MPTQRDSSTMSH) are enriched in polar residues. A disordered region spans residues 1-21 (MPTQRDSSTMSHTVACGGGGD). Pro-2 is modified (N-acetylproline). A required for interaction with RAB2 region spans residues 2–28 (PTQRDSSTMSHTVACGGGGDHSHQVRV). Residues 2 to 252 (PTQRDSSTMS…KASSSLGLQD (251 aa)) form a regulatory domain region. Thr-3 is subject to Phosphothreonine. Residues Ser-7 and Ser-8 each carry the phosphoserine modification. Residue Thr-9 is modified to Phosphothreonine. The region spanning 25–108 (QVRVKAYYRG…SELLIHVFPC (84 aa)) is the PB1 domain. Residues 72 to 91 (DEEGDPCTVSSQLELEEAFR) form an interaction with PARD6A region. Residues 125-134 (YRRGARRWRK) carry the Pseudosubstrate motif. The Phorbol-ester/DAG-type zinc-finger motif lies at 140-190 (GHTFQAKRFNRRAHCAICTDRIWGLGRQGYKCINCKLLVHKKCHKLVTIEC). Residues 253–521 (FDLLRVIGRG…FADIQGHPFF (269 aa)) enclose the Protein kinase domain. ATP is bound at residue 259–267 (IGRGSYAKV). Tyr-264 and Tyr-279 each carry phosphotyrosine; by SRC. Lys-282 serves as a coordination point for ATP. The residue at position 333 (Tyr-333) is a Phosphotyrosine; by SRC. Asp-377 functions as the Proton acceptor in the catalytic mechanism. Phosphothreonine occurs at positions 411 and 563. An AGC-kinase C-terminal domain is found at 522–593 (RNVDWDMMEQ…INPLLMSAEE (72 aa)).

Belongs to the protein kinase superfamily. AGC Ser/Thr protein kinase family. PKC subfamily. In terms of assembly, forms a complex with SQSTM1 and MP2K5. Interacts directly with SQSTM1. Interacts with IKBKB. Interacts with PARD6A, PARD6B and PARD6G. Part of a quaternary complex containing aPKC, PARD3, a PARD6 protein (PARD6A, PARD6B or PARD6G) and a GTPase protein (CDC42 or RAC1). Part of a complex with LLGL1 and PARD6B. Interacts with ADAP1/CENTA1. Interaction with SMG1, through the ZN-finger domain, activates the kinase activity. Interacts with CDK7. Forms a complex with RAB2A and GAPDH involved in recruitment onto the membrane of vesicular tubular clusters (VTCs). Interacts with ECT2 ('Thr-359' phosphorylated form). Interacts with VAMP2. Interacts with WDFY2 (via WD repeats 1-3). Post-translationally, phosphorylation at Thr-411 in the activation loop is not mandatory for activation. Upon neuronal growth factor (NGF) stimulation, phosphorylated by SRC at Tyr-264, Tyr-279 and Tyr-333. Phosphorylation on Tyr-264 facilitates binding to KPNB1/importin-beta regulating entry of PRKCI into the nucleus. Phosphorylation on Tyr-333 is important for NF-kappa-B stimulation. Phosphorylated at Thr-563 during the initial phase of long term potentiation.

It is found in the cytoplasm. It localises to the membrane. The protein localises to the endosome. Its subcellular location is the nucleus. The catalysed reaction is L-seryl-[protein] + ATP = O-phospho-L-seryl-[protein] + ADP + H(+). It carries out the reaction L-threonyl-[protein] + ATP = O-phospho-L-threonyl-[protein] + ADP + H(+). Its activity is regulated as follows. Atypical PKCs (PRKCI and PRKCZ) exhibit an elevated basal enzymatic activity (that may be due to the interaction with SMG1 or SQSTM1) and are not regulated by diacylglycerol, phosphatidylserine, phorbol esters or calcium ions. Two specific sites, Thr-411 (activation loop of the kinase domain) and Thr-563 (turn motif), need to be phosphorylated for its full activation. Might also be a target for novel lipid activators that are elevated during nutrient-stimulated insulin secretion. Functionally, calcium- and diacylglycerol-independent serine/ threonine-protein kinase that plays a general protective role against apoptotic stimuli, is involved in NF-kappa-B activation, cell survival, differentiation and polarity, and contributes to the regulation of microtubule dynamics in the early secretory pathway. Is necessary for BCR-ABL oncogene-mediated resistance to apoptotic drug in leukemia cells, protecting leukemia cells against drug-induced apoptosis. In cultured neurons, prevents amyloid beta protein-induced apoptosis by interrupting cell death process at a very early step. In glioblastoma cells, may function downstream of phosphatidylinositol 3-kinase (PI3K) and PDPK1 in the promotion of cell survival by phosphorylating and inhibiting the pro-apoptotic factor BAD. Can form a protein complex in non-small cell lung cancer (NSCLC) cells with PARD6A and ECT2 and regulate ECT2 oncogenic activity by phosphorylation, which in turn promotes transformed growth and invasion. In response to nerve growth factor (NGF), acts downstream of SRC to phosphorylate and activate IRAK1, allowing the subsequent activation of NF-kappa-B and neuronal cell survival. Functions in the organization of the apical domain in epithelial cells by phosphorylating EZR. This step is crucial for activation and normal distribution of EZR at the early stages of intestinal epithelial cell differentiation. Forms a protein complex with LLGL1 and PARD6B independently of PARD3 to regulate epithelial cell polarity. Plays a role in microtubule dynamics in the early secretory pathway through interaction with RAB2A and GAPDH and recruitment to vesicular tubular clusters (VTCs). In human coronary artery endothelial cells (HCAEC), is activated by saturated fatty acids and mediates lipid-induced apoptosis. Downstream of PI3K is required for insulin-stimulated glucose transport. Activates RAB4A and promotes its association with KIF3A which is required for the insulin-induced SLC2A4/GLUT4 translocation in adipocytes. Is essential in early embryogenesis and development of differentiating photoreceptors by playing a role in the establishment of epithelial and neuronal polarity. Involved in early synaptic long term potentiation phase in CA1 hippocampal cells and short term memory formation. This chain is Protein kinase C iota type (Prkci), found in Mus musculus (Mouse).